Consider the following 345-residue polypeptide: D-fructose 1,6-bisphosphatase class 2/sedoheptulose 1,7-bisphosphatase (345 aa).

Residues Asp-33, Glu-57, Asp-97, and Glu-100 each coordinate Mn(2+). Residues 100–102, Tyr-131, 176–178, and 198–200 contribute to the substrate site; these read EGT, RPR, and DGD. Glu-225 provides a ligand contact to Mn(2+).

It belongs to the FBPase class 2 family. Homotetramer. Mn(2+) serves as cofactor.

It carries out the reaction beta-D-fructose 1,6-bisphosphate + H2O = beta-D-fructose 6-phosphate + phosphate. The enzyme catalyses D-sedoheptulose 1,7-bisphosphate + H2O = D-sedoheptulose 7-phosphate + phosphate. Its pathway is carbohydrate biosynthesis; Calvin cycle. Catalyzes the hydrolysis of fructose 1,6-bisphosphate (Fru 1,6-P2) and sedoheptulose 1,7-bisphosphate (Sed 1,7-P2) to fructose 6-phosphate and sedoheptulose 7-phosphate, respectively. This Crocosphaera subtropica (strain ATCC 51142 / BH68) (Cyanothece sp. (strain ATCC 51142)) protein is D-fructose 1,6-bisphosphatase class 2/sedoheptulose 1,7-bisphosphatase.